Consider the following 339-residue polypeptide: Anthranilate phosphoribosyltransferase (339 aa).

5-phospho-alpha-D-ribose 1-diphosphate-binding positions include Gly80, 83–84 (GD), Thr88, 90–93 (NIST), 108–116 (KHGNRSVSS), and Ser120. Anthranilate is bound at residue Gly80. Mg(2+) is bound at residue Ser92. Position 111 (Asn111) interacts with anthranilate. Arg166 serves as a coordination point for anthranilate. The Mg(2+) site is built by Asp225 and Glu226.

Belongs to the anthranilate phosphoribosyltransferase family. As to quaternary structure, homodimer. The cofactor is Mg(2+).

The catalysed reaction is N-(5-phospho-beta-D-ribosyl)anthranilate + diphosphate = 5-phospho-alpha-D-ribose 1-diphosphate + anthranilate. Its pathway is amino-acid biosynthesis; L-tryptophan biosynthesis; L-tryptophan from chorismate: step 2/5. In terms of biological role, catalyzes the transfer of the phosphoribosyl group of 5-phosphorylribose-1-pyrophosphate (PRPP) to anthranilate to yield N-(5'-phosphoribosyl)-anthranilate (PRA). In Desulfosudis oleivorans (strain DSM 6200 / JCM 39069 / Hxd3) (Desulfococcus oleovorans), this protein is Anthranilate phosphoribosyltransferase.